Reading from the N-terminus, the 1764-residue chain is Nucleolar pre-ribosomal-associated protein 1 (1764 aa).

The interval 1-23 is disordered; that stretch reads MSNHSEAYGSRDQRREKYTQGKE. A compositionally biased stretch (basic and acidic residues) spans 9–23; that stretch reads GSRDQRREKYTQGKE.

As to quaternary structure, associates with pre-60S ribosomal particles. Predominantly associated with the 27SA2 pre-rRNA. Can associate with a subset of box H/ACA and box C/D small nucleolar RNPs (snoRNPs) required for peptidyl transferase center modification and with small RNAs snR37 and snR42. Interacts with URB2. Together with DBP6, NOP8, URB2 and RSA3, forms an RNA-independent complex, which is required during early maturation of nascent 60S ribosomal subunits.

The protein localises to the nucleus. It is found in the nucleolus. Required for 60S ribosomal subunit formation and pre-rRNA processing. Required for normal accumulation of 25S and 5.8S rRNAs. The polypeptide is Nucleolar pre-ribosomal-associated protein 1 (URB1) (Saccharomyces cerevisiae (strain ATCC 204508 / S288c) (Baker's yeast)).